Consider the following 827-residue polypeptide: Glycerol-3-phosphate acyltransferase (827 aa).

Residues 325–330 carry the HXXXXD motif motif; the sequence is CHRSHM.

The protein belongs to the GPAT/DAPAT family.

Its subcellular location is the cell inner membrane. It catalyses the reaction sn-glycerol 3-phosphate + an acyl-CoA = a 1-acyl-sn-glycero-3-phosphate + CoA. It functions in the pathway phospholipid metabolism; CDP-diacylglycerol biosynthesis; CDP-diacylglycerol from sn-glycerol 3-phosphate: step 1/3. The protein is Glycerol-3-phosphate acyltransferase of Shigella flexneri serotype 5b (strain 8401).